A 451-amino-acid polypeptide reads, in one-letter code: UDP-N-acetylmuramoylalanine--D-glutamate ligase (451 aa).

118–124 provides a ligand contact to ATP; it reads GTKGKST.

Belongs to the MurCDEF family.

It is found in the cytoplasm. The enzyme catalyses UDP-N-acetyl-alpha-D-muramoyl-L-alanine + D-glutamate + ATP = UDP-N-acetyl-alpha-D-muramoyl-L-alanyl-D-glutamate + ADP + phosphate + H(+). The protein operates within cell wall biogenesis; peptidoglycan biosynthesis. Functionally, cell wall formation. Catalyzes the addition of glutamate to the nucleotide precursor UDP-N-acetylmuramoyl-L-alanine (UMA). The sequence is that of UDP-N-acetylmuramoylalanine--D-glutamate ligase (murD) from Borreliella burgdorferi (strain ATCC 35210 / DSM 4680 / CIP 102532 / B31) (Borrelia burgdorferi).